Here is a 296-residue protein sequence, read N- to C-terminus: Nucleotide-binding protein spyM18_0713 (296 aa).

13–20 (GMSGAGKT) is a binding site for ATP. 63 to 66 (DMRS) contacts GTP.

This sequence belongs to the RapZ-like family.

Displays ATPase and GTPase activities. In Streptococcus pyogenes serotype M18 (strain MGAS8232), this protein is Nucleotide-binding protein spyM18_0713.